A 1433-amino-acid chain; its full sequence is Probable ATP-dependent RNA helicase spindle-E (1433 aa).

In terms of domain architecture, Helicase ATP-binding spans 126–294 (INAINENPVV…FANERSAPPV (169 aa)). 139-146 (GETGCGKT) contacts ATP. A DEAH box motif is present at residues 240–243 (DEVH). Residues 355 to 526 (TGKSYNQSLR…NCVLKAKELK (172 aa)) enclose the Helicase C-terminal domain. The Tudor domain maps to 935–998 (AGAITKGLML…RLMSQDLLRH (64 aa)).

It belongs to the DEAD box helicase family. DEAH subfamily.

Its subcellular location is the cytoplasm. It catalyses the reaction ATP + H2O = ADP + phosphate + H(+). Probable ATP-binding RNA helicase which plays a central role during spermatogenesis and oogenesis by repressing transposable elements and preventing their mobilization, which is essential for the germline integrity. Acts via the piRNA metabolic process, which mediates the repression of transposable elements during meiosis by forming complexes composed of piRNAs and Piwi and govern the methylation and subsequent repression of transposons. Involved in the repression of LTR retrotransposon copia. Also involved in telomere regulation by repressing specialized telomeric retroelements HeT-A, TAHRE, and TART; Drosophila telomeres being maintained by transposition of specialized telomeric retroelements. Involved in telomeric trans-silencing, a repression mechanism by which a transposon or a transgene inserted in subtelomeric heterochromatin has the capacity to repress in trans in the female germline, a homologous transposon, or transgene located in euchromatin. Involved in the repression of testis-expressed Stellate genes by the homologous Su(Ste) repeats. Required for anteroposterior and dorsoventral axis formation during oogenesis. The sequence is that of Probable ATP-dependent RNA helicase spindle-E (spn-E) from Drosophila pseudoobscura pseudoobscura (Fruit fly).